The sequence spans 528 residues: Linear primary-alkylsulfatase (528 aa).

Residues H42, H44, D46, H47, E151, and E170 each contribute to the Zn(2+) site. Sulfate-binding positions include 179-184 (NVHTLR) and R189. A Zn(2+)-binding site is contributed by H213. Residue Y275 coordinates sulfate.

This sequence belongs to the metallo-beta-lactamase superfamily. Type III sulfatase family. The cofactor is Zn(2+).

The enzyme catalyses a primary linear alkyl sulfate ester + H2O = a primary alcohol + sulfate + H(+). In terms of biological role, alkylsulfatase that cleaves the widely used detergent sodium dodecyl sulfate (SDS), which allows the bacterium to use SDS as a sole carbon or sulfur source. This Pseudomonas sp. (strain ATCC 19151) protein is Linear primary-alkylsulfatase.